The primary structure comprises 886 residues: Putative leucine-rich repeat receptor-like serine/threonine-protein kinase At2g14440 (886 aa).

A signal peptide spans 1–23 (METRSKLMLLACATFSIISLVKS). At 24-528 (QNQQGFISLY…KHQPKSWLVA (505 aa)) the chain is on the extracellular side. Residues Asn-49, Asn-69, Asn-232, Asn-236, Asn-259, Asn-292, Asn-434, Asn-447, Asn-458, and Asn-471 are each glycosylated (N-linked (GlcNAc...) asparagine). 4 LRR repeats span residues 413 to 436 (RIIS…QNLT), 437 to 460 (MLRE…QNLT), 461 to 483 (MLRE…LATI), and 485 to 507 (PLLV…LQDR). The helical transmembrane segment at 529–549 (IVASISCVAVTIIVLVLIFIF) threads the bilayer. The Cytoplasmic portion of the chain corresponds to 550–886 (RRRKSSTRKV…TFISDIPSAR (337 aa)). The Protein kinase domain maps to 581–850 (NNFEVVLGKG…NMTRVAHELN (270 aa)). ATP contacts are provided by residues 587-595 (LGKGGFGVV) and Lys-608. At Tyr-653 the chain carries Phosphotyrosine. Asp-705 serves as the catalytic Proton acceptor. The residue at position 739 (Ser-739) is a Phosphoserine. Phosphothreonine occurs at positions 740 and 745. Tyr-753 is subject to Phosphotyrosine. The disordered stretch occupies residues 863 to 886 (SQDQNSSKSSGHTVTFISDIPSAR). The segment covering 865–878 (DQNSSKSSGHTVTF) has biased composition (polar residues).

It belongs to the protein kinase superfamily. Ser/Thr protein kinase family.

Its subcellular location is the cell membrane. It carries out the reaction L-seryl-[protein] + ATP = O-phospho-L-seryl-[protein] + ADP + H(+). It catalyses the reaction L-threonyl-[protein] + ATP = O-phospho-L-threonyl-[protein] + ADP + H(+). The protein is Putative leucine-rich repeat receptor-like serine/threonine-protein kinase At2g14440 of Arabidopsis thaliana (Mouse-ear cress).